Reading from the N-terminus, the 264-residue chain is Acyl-[acyl-carrier-protein]--UDP-N-acetylglucosamine O-acyltransferase (264 aa).

Belongs to the transferase hexapeptide repeat family. LpxA subfamily. In terms of assembly, homotrimer.

The protein localises to the cytoplasm. It catalyses the reaction a (3R)-hydroxyacyl-[ACP] + UDP-N-acetyl-alpha-D-glucosamine = a UDP-3-O-[(3R)-3-hydroxyacyl]-N-acetyl-alpha-D-glucosamine + holo-[ACP]. It participates in glycolipid biosynthesis; lipid IV(A) biosynthesis; lipid IV(A) from (3R)-3-hydroxytetradecanoyl-[acyl-carrier-protein] and UDP-N-acetyl-alpha-D-glucosamine: step 1/6. Functionally, involved in the biosynthesis of lipid A, a phosphorylated glycolipid that anchors the lipopolysaccharide to the outer membrane of the cell. The chain is Acyl-[acyl-carrier-protein]--UDP-N-acetylglucosamine O-acyltransferase from Rickettsia rickettsii.